A 104-amino-acid chain; its full sequence is Inclusion membrane protein F (104 aa).

2 helical membrane-spanning segments follow: residues 39–59 (LVVA…SLVA) and 70–90 (LAVL…VLFI).

The protein resides in the secreted. The protein localises to the host vacuole. It localises to the host pathogen-containing vacuole. It is found in the host pathogen-containing vacuole membrane. Functionally, inclusion membrane protein probably involved in early modification events of the chlamydial inclusion. The polypeptide is Inclusion membrane protein F (Chlamydia trachomatis serovar L2 (strain ATCC VR-902B / DSM 19102 / 434/Bu)).